Consider the following 243-residue polypeptide: uncharacterized protein (243 aa).

Positions 2-240 (TKIFAHRGAS…DFPEKASALL (239 aa)) constitute a GP-PDE domain.

This is an uncharacterized protein from Bacillus subtilis (strain 168).